The chain runs to 275 residues: 2,3,4,5-tetrahydropyridine-2,6-dicarboxylate N-succinyltransferase (275 aa).

Residues arginine 108 and aspartate 145 each contribute to the substrate site.

Belongs to the transferase hexapeptide repeat family. In terms of assembly, homotrimer.

The protein resides in the cytoplasm. The catalysed reaction is (S)-2,3,4,5-tetrahydrodipicolinate + succinyl-CoA + H2O = (S)-2-succinylamino-6-oxoheptanedioate + CoA. Its pathway is amino-acid biosynthesis; L-lysine biosynthesis via DAP pathway; LL-2,6-diaminopimelate from (S)-tetrahydrodipicolinate (succinylase route): step 1/3. The polypeptide is 2,3,4,5-tetrahydropyridine-2,6-dicarboxylate N-succinyltransferase (Ruegeria pomeroyi (strain ATCC 700808 / DSM 15171 / DSS-3) (Silicibacter pomeroyi)).